The chain runs to 340 residues: MIILAIESSCDETGVGIADLRDDGTVTLLADEVASSVDEHARFGGVVPEIASRAHLEALGPTMRRALDAAGIERPDVVAATIGPGLAGALLVGVAAAKAYAAGWGVPFYGVNHLGGHLAADVYDHGPLPESVGLLVSGGHTHLLHVRSLGEPIIELGSTVDDAAGEAYDKVARLLGLGYPGGRVLDELARTGDRDAIVFPRGMTGPRDDPYTFSFSGLKTAVARYVEAHPEASHADVAAGFQESVADVLTAKAVRAATDLGVSTLLIAGGVAANSRLRELAEERCAAAGLTLRVPRPRLCTDNGAMIASFAAHLIAAGAQPSPLDAASDPGLPVVKGQVA.

Residues histidine 113 and histidine 117 each contribute to the Fe cation site. Substrate is bound by residues leucine 135–glycine 139, aspartate 169, glycine 182, aspartate 186, and asparagine 274. Residue aspartate 302 coordinates Fe cation.

This sequence belongs to the KAE1 / TsaD family. The cofactor is Fe(2+).

The protein localises to the cytoplasm. The catalysed reaction is L-threonylcarbamoyladenylate + adenosine(37) in tRNA = N(6)-L-threonylcarbamoyladenosine(37) in tRNA + AMP + H(+). In terms of biological role, required for the formation of a threonylcarbamoyl group on adenosine at position 37 (t(6)A37) in tRNAs that read codons beginning with adenine. Is involved in the transfer of the threonylcarbamoyl moiety of threonylcarbamoyl-AMP (TC-AMP) to the N6 group of A37, together with TsaE and TsaB. TsaD likely plays a direct catalytic role in this reaction. This is tRNA N6-adenosine threonylcarbamoyltransferase from Mycolicibacterium smegmatis (strain ATCC 700084 / mc(2)155) (Mycobacterium smegmatis).